The following is a 195-amino-acid chain: Myosin regulatory light chain, striated muscle, 25 kDa isoform (195 aa).

Residues 1–17 show a composition bias toward basic and acidic residues; sequence AKDKEKKEKKDKKKDDA. Positions 1 to 39 are disordered; the sequence is AKDKEKKEKKDKKKDDAPAEEAPAAAAAPAEEAAPTPSA. The segment covering 20-39 has biased composition (low complexity); the sequence is EEAPAAAAAPAEEAAPTPSA. 2 EF-hand domains span residues 55–90 and 124–159; these read NQIQ…IGRE and DTEG…VGDQ. Residues aspartate 68, aspartate 70, aspartate 72, and aspartate 79 each contribute to the Ca(2+) site.

As to quaternary structure, myosin is a hexamer of 2 heavy chains and 4 light chains.

Plays an important role in regulation of muscle cell contractile activity. This is Myosin regulatory light chain, striated muscle, 25 kDa isoform from Lumbricus terrestris (Common earthworm).